The sequence spans 292 residues: 32 kDa protein (292 aa).

May be involved in transmission by vector nematode species. In Bidens pilosa (Hairy beggarticks), this protein is 32 kDa protein.